The primary structure comprises 401 residues: Argininosuccinate synthase (401 aa).

Residues Ala-9–Ser-17 and Ala-35 contribute to the ATP site. Tyr-86 contributes to the L-citrulline binding site. Gly-116 provides a ligand contact to ATP. L-aspartate is bound by residues Thr-118, Asn-122, and Asp-123. Asn-122 is a binding site for L-citrulline. L-citrulline contacts are provided by Arg-126, Ser-175, Ser-184, Glu-261, and Tyr-273.

This sequence belongs to the argininosuccinate synthase family. Type 1 subfamily. In terms of assembly, homotetramer.

The protein resides in the cytoplasm. The enzyme catalyses L-citrulline + L-aspartate + ATP = 2-(N(omega)-L-arginino)succinate + AMP + diphosphate + H(+). The protein operates within amino-acid biosynthesis; L-arginine biosynthesis; L-arginine from L-ornithine and carbamoyl phosphate: step 2/3. The sequence is that of Argininosuccinate synthase from Aquifex aeolicus (strain VF5).